We begin with the raw amino-acid sequence, 131 residues long: UPF0102 protein YraN (131 aa).

A compositionally biased stretch (polar residues) spans 1 to 19 (MATVPTRSGSPRQLTTKQT). Residues 1-21 (MATVPTRSGSPRQLTTKQTGD) are disordered.

The protein belongs to the UPF0102 family.

This is UPF0102 protein YraN from Escherichia coli O127:H6 (strain E2348/69 / EPEC).